We begin with the raw amino-acid sequence, 400 residues long: S-adenosylmethionine synthase (400 aa).

His-17 is a binding site for ATP. Asp-19 is a Mg(2+) binding site. Residue Glu-45 coordinates K(+). Residues Glu-58 and Gln-101 each coordinate L-methionine. The interval 101–111 (QSPDIAMGVDQ) is flexible loop. Residues 177-179 (DGK), 244-245 (RF), Asp-253, 259-260 (RK), Ala-276, and Lys-280 contribute to the ATP site. Residue Asp-253 coordinates L-methionine. Lys-284 is an L-methionine binding site.

It belongs to the AdoMet synthase family. In terms of assembly, homotetramer; dimer of dimers. The cofactor is Mg(2+). K(+) serves as cofactor.

It localises to the cytoplasm. The catalysed reaction is L-methionine + ATP + H2O = S-adenosyl-L-methionine + phosphate + diphosphate. It functions in the pathway amino-acid biosynthesis; S-adenosyl-L-methionine biosynthesis; S-adenosyl-L-methionine from L-methionine: step 1/1. In terms of biological role, catalyzes the formation of S-adenosylmethionine (AdoMet) from methionine and ATP. The overall synthetic reaction is composed of two sequential steps, AdoMet formation and the subsequent tripolyphosphate hydrolysis which occurs prior to release of AdoMet from the enzyme. The sequence is that of S-adenosylmethionine synthase from Bacillus licheniformis (strain ATCC 14580 / DSM 13 / JCM 2505 / CCUG 7422 / NBRC 12200 / NCIMB 9375 / NCTC 10341 / NRRL NRS-1264 / Gibson 46).